Here is a 535-residue protein sequence, read N- to C-terminus: UDP-glucuronosyltransferase 1A1 (535 aa).

A signal peptide spans 1–29; sequence MSVVCRSSCSLLLLPCLLLCVLGPSASHA. Residues Asn-89, Asn-297, and Asn-435 are each glycosylated (N-linked (GlcNAc...) asparagine). The helical transmembrane segment at 493 to 509 threads the bilayer; it reads VIGFLLAIVLTVVFIVY.

Belongs to the UDP-glycosyltransferase family. Homodimers. Homooligomer. Interacts with UGT1A3, UGT1A4, UGT1A6, UGT1A7, UGT1A8, UGT1A9 and UGT1A10 to form heterodimers.

Its subcellular location is the endoplasmic reticulum membrane. It carries out the reaction glucuronate acceptor + UDP-alpha-D-glucuronate = acceptor beta-D-glucuronoside + UDP + H(+). The enzyme catalyses 17beta-estradiol + UDP-alpha-D-glucuronate = 17beta-estradiol 3-O-(beta-D-glucuronate) + UDP + H(+). The catalysed reaction is 2-hydroxyestrone + UDP-alpha-D-glucuronate = 2-hydroxyestrone 3-O-(beta-D-glucuronate) + UDP + H(+). It catalyses the reaction 2-hydroxy-17beta-estradiol + UDP-alpha-D-glucuronate = 2-hydroxy-17beta-estradiol 3-O-(beta-D-glucuronate) + UDP + H(+). It carries out the reaction 2-methoxy-17beta-estradiol + UDP-alpha-D-glucuronate = 2-methoxy-17beta-estradiol 3-O-(beta-D-glucuronate) + UDP + H(+). The enzyme catalyses 17alpha-estradiol + UDP-alpha-D-glucuronate = 17alpha-estradiol 3-O-(beta-D-glucuronate) + UDP + H(+). The catalysed reaction is 16beta,17beta-estriol + UDP-alpha-D-glucuronate = 16beta,17beta-estriol 16-O-(beta-D-glucuronate) + UDP + H(+). It catalyses the reaction losartan + UDP-alpha-D-glucuronate = losartan-2-N-beta-D-glucuronide + UDP. It carries out the reaction prunetin + UDP-alpha-D-glucuronate = prunetin-4'-O-beta-D-glucuronide + UDP. The enzyme catalyses SN-38 + UDP-alpha-D-glucuronate = SN-38 O-beta-D-glucuronide + UDP + H(+). The catalysed reaction is (4Z,15Z)-bilirubin IXalpha + UDP-alpha-D-glucuronate = (4Z,15Z)-bilirubin IXalpha C12-beta-D-glucuronoside + UDP. It catalyses the reaction (4Z,15Z)-bilirubin IXalpha + UDP-alpha-D-glucuronate = (4Z,15Z)-bilirubin IXalpha C8-beta-D-glucuronoside + UDP. It carries out the reaction (4Z,15Z)-bilirubin IXalpha C8-beta-D-glucuronoside + UDP-alpha-D-glucuronate = (4Z,15Z)-bilirubin IXalpha C8,C12-beta-D-bisglucuronoside + UDP. The enzyme catalyses (4Z,15Z)-bilirubin IXalpha C12-beta-D-glucuronoside + UDP-alpha-D-glucuronate = (4Z,15Z)-bilirubin IXalpha C8,C12-beta-D-bisglucuronoside + UDP. The catalysed reaction is 8-iso-prostaglandin F2alpha + UDP-alpha-D-glucuronate = 8-iso-prostaglandin F2alpha-glucuronide + UDP + H(+). It catalyses the reaction (5Z,8Z,11Z,14Z)-eicosatetraenoate + UDP-alpha-D-glucuronate = O-[(5Z),(8Z),(11Z),(14Z)-eicosatetraenoyl]-beta-D-glucuronate + UDP. It carries out the reaction 15-hydroxy-(5Z,8Z,11Z,13E)-eicosatetraenoate + UDP-alpha-D-glucuronate = 15-O-(beta-D-glucuronosyl)-(5Z,8Z,11Z,14Z)-eicosatetraenoate + UDP + H(+). The enzyme catalyses 20-hydroxy-(5Z,8Z,11Z,14Z)-eicosatetraenoate + UDP-alpha-D-glucuronate = 20-O-(beta-D-glucuronosyl)-(5Z,8Z,11Z,14Z)-eicosatetraenoate + UDP + H(+). The catalysed reaction is prostaglandin B1 + UDP-alpha-D-glucuronate = 15-O-(beta-D-glucuronosyl)-prostaglandin B1 + UDP + H(+). It catalyses the reaction (E)-ferulate + UDP-alpha-D-glucuronate = (E)-4-O-(beta-D-glucuronosyl)-ferulate + UDP + H(+). It carries out the reaction (E)-ferulate + UDP-alpha-D-glucuronate = (E)-ferulic acid beta-D-glucuronate ester + UDP. UDP-glucuronosyltransferase (UGT) that catalyzes phase II biotransformation reactions in which lipophilic substrates are conjugated with glucuronic acid to increase the metabolite's water solubility, thereby facilitating excretion into either the urine or bile. Essential for the elimination and detoxification of drugs, xenobiotics and endogenous compounds. Catalyzes the glucuronidation of endogenous estrogen hormones such as estradiol, estrone and estriol. Involved in the glucuronidation of bilirubin, a degradation product occurring in the normal catabolic pathway that breaks down heme in vertebrates. Involved in the glucuronidation of arachidonic acid (AA) and AA-derived eicosanoids including 15-HETE, 20-HETE, PGB1 and F2-isoprostane (8-iso-PGF2alpha). Involved in the glucuronidation of the phytochemical ferulic acid at the phenolic or the carboxylic acid group. Also catalyzes the glucuronidation the isoflavones genistein, daidzein, glycitein, formononetin, biochanin A and prunetin, which are phytoestrogens with anticancer and cardiovascular properties. Involved in the glucuronidation of the AGTR1 angiotensin receptor antagonist losartan, a drug which can inhibit the effect of angiotensin II. Involved in the biotransformation of 7-ethyl-10-hydroxycamptothecin (SN-38), the pharmacologically active metabolite of the anticancer drug irinotecan. The chain is UDP-glucuronosyltransferase 1A1 from Rattus norvegicus (Rat).